We begin with the raw amino-acid sequence, 502 residues long: Type-2 serine--tRNA ligase (502 aa).

Residue alanine 304 coordinates L-serine. Cysteine 306 lines the Zn(2+) pocket. Arginine 336 serves as a coordination point for L-serine. Residues 336–338 (RYE) and 347–348 (RV) contribute to the ATP site. L-serine-binding positions include 353–355 (RVE) and glutamine 400. Glutamate 355 serves as a coordination point for Zn(2+). Glutamate 432 contributes to the ATP binding site. Asparagine 435 contributes to the L-serine binding site. Residue cysteine 461 participates in Zn(2+) binding. Arginine 468 contacts ATP.

This sequence belongs to the class-II aminoacyl-tRNA synthetase family. Type-2 seryl-tRNA synthetase subfamily. Homodimer. It depends on Zn(2+) as a cofactor.

It is found in the cytoplasm. The enzyme catalyses tRNA(Ser) + L-serine + ATP = L-seryl-tRNA(Ser) + AMP + diphosphate + H(+). The catalysed reaction is tRNA(Sec) + L-serine + ATP = L-seryl-tRNA(Sec) + AMP + diphosphate + H(+). The protein operates within aminoacyl-tRNA biosynthesis; selenocysteinyl-tRNA(Sec) biosynthesis; L-seryl-tRNA(Sec) from L-serine and tRNA(Sec): step 1/1. Catalyzes the attachment of serine to tRNA(Ser). Is also able to aminoacylate tRNA(Sec) with serine, to form the misacylated tRNA L-seryl-tRNA(Sec), which will be further converted into selenocysteinyl-tRNA(Sec). The polypeptide is Type-2 serine--tRNA ligase (Methanococcoides burtonii (strain DSM 6242 / NBRC 107633 / OCM 468 / ACE-M)).